The sequence spans 2203 residues: Voltage-dependent L-type calcium channel subunit alpha-1D (2203 aa).

Disordered stretches follow at residues 1-51 (MMMM…QTVL) and 64-100 (KAAQ…SSNS). Residues 1-126 (MMMMMMMKKM…RACISIVDWK (126 aa)) lie on the Cytoplasmic side of the membrane. A compositionally biased stretch (polar residues) spans 38–51 (GPTSQPNSSKQTVL). Basic residues predominate over residues 82-93 (QRKRQQYAKSKK). The stretch at 112–408 (NNPIRRACIS…NLVLGVLSGE (297 aa)) is one I repeat. A helical transmembrane segment spans residues 127 to 145 (PFDIFILLAIFANCVALAI). Residues 146–163 (YIPFPEDDSNSTNHNLEK) are Extracellular-facing. Asparagine 155 carries N-linked (GlcNAc...) asparagine glycosylation. Residues 164-183 (VEYAFLIIFTVETFLKIIAS) traverse the membrane as a helical segment. Topologically, residues 184-195 (GLLLHPNASVRN) are cytoplasmic. The helical transmembrane segment at 196–214 (GWNLLDFVIVIVGLFSVIL) threads the bilayer. Topologically, residues 215–235 (EQLTKETEGGNHSSGKSGGFD) are extracellular. Asparagine 225 carries N-linked (GlcNAc...) asparagine glycosylation. Residues 236 to 254 (VKALRAFRVLRPLRLVSGV) traverse the membrane as a helical segment. Residues 255–273 (PSLQVVLNSIIKAMVPLLH) are Cytoplasmic-facing. A helical membrane pass occupies residues 274-293 (IALLVLFVIIIYAIIGLELF). Topologically, residues 294–381 (IGKMHKTCFF…WVNDAIGWEW (88 aa)) are extracellular. Asparagine 329 carries an N-linked (GlcNAc...) asparagine glycan. Glutamate 364 is a Ca(2+) binding site. A helical membrane pass occupies residues 382–406 (PWVYFVSLIILGSFFVLNLVLGVLS). The Cytoplasmic portion of the chain corresponds to 407-582 (GEFSKEREKA…RRCRAAVKSV (176 aa)). The binding to the beta subunit stretch occupies residues 429 to 446 (QQLEEDLKGYLDWITQAE). The disordered stretch occupies residues 449–480 (DPENEEEGGEEGKRNTSMPTSETESVNTENVS). Polar residues predominate over residues 463–479 (NTSMPTSETESVNTENV). One copy of the II repeat lies at 528 to 774 (EALCVCRCSL…DWNAVMYDGI (247 aa)). A helical membrane pass occupies residues 583–602 (TFYWLVIVLVFLNTLTISSE). Over 603-617 (HYNQPDWLTQIQDIA) the chain is Extracellular. A helical membrane pass occupies residues 618-636 (NKVLLALFTCEMLVKMYSL). Residues 637 to 644 (GLQAYFVS) are Cytoplasmic-facing. Residues 645–663 (LFNRFDCFVVCGGITETIL) form a helical membrane-spanning segment. Topologically, residues 664-673 (VELELMSPLG) are extracellular. The chain crosses the membrane as a helical span at residues 674–692 (VSVFRCVRLLRIFKVTRHW). The Cytoplasmic segment spans residues 693 to 711 (TSLSNLVASLLNSMKSIAS). Residues 712–732 (LLLLLFLFIIIFSLLGMQLFG) traverse the membrane as a helical segment. Residues 733–786 (GKFNFDETQTKRSTFDNFPQALLTVFQILTGEDWNAVMYDGIMAYGGPSSSGMI) lie on the Extracellular side of the membrane. Glutamate 764 provides a ligand contact to Ca(2+). The helical transmembrane segment at 787–811 (VCIYFIILFICGNYILLKLFLAIAV) threads the bilayer. Residues 812–945 (DNLADAESLN…VGCHKLINHH (134 aa)) lie on the Cytoplasmic side of the membrane. A disordered region spans residues 822–909 (TAQKEEAEEK…AGPRPRRISE (88 aa)). Residues 824–849 (QKEEAEEKERKKIARKESLENKKNNK) show a composition bias toward basic and acidic residues. The segment covering 850 to 861 (PEVNQIANSDNK) has biased composition (polar residues). A compositionally biased stretch (acidic residues) spans 884–897 (VGEEEEEEEEDEPE). An III repeat occupies 892–1174 (EEDEPEVPAG…LLYKAIDSNG (283 aa)). The chain crosses the membrane as a helical span at residues 946–964 (IFTNLILVFIMLSSAALAA). Over 965–980 (EDPIRSHSFRNTILGY) the chain is Extracellular. The chain crosses the membrane as a helical span at residues 981-1000 (FDYAFTAIFTVEILLKMTTF). The Cytoplasmic segment spans residues 1001 to 1012 (GAFLHKGAFCRN). Residues 1013 to 1031 (YFNLLDMLVVGVSLVSFGI) traverse the membrane as a helical segment. At 1032 to 1037 (QSSAIS) the chain is on the extracellular side. Residues 1038–1057 (VVKILRVLRVLRPLRAINRA) form a helical membrane-spanning segment. The Cytoplasmic segment spans residues 1058–1076 (KGLKHVVQCVFVAIRTIGN). Residues 1077-1096 (IMIVTTLLQFMFACIGVQLF) form a helical membrane-spanning segment. Topologically, residues 1097–1186 (KGKFYRCTDE…VGPVYNYRVE (90 aa)) are extracellular. The dihydropyridine binding stretch occupies residues 1134–1224 (RIWQNSDFNF…QEQGEKEYKN (91 aa)). A Ca(2+)-binding site is contributed by glutamate 1160. The chain crosses the membrane as a helical span at residues 1187-1207 (ISIFFIIYIIIVAFFMMNIFV). The Cytoplasmic portion of the chain corresponds to 1208–1264 (GFVIVTFQEQGEKEYKNCELDKNQRQCVEYALKARPLRRYIPKNPYQYKFWYVVNSS). The stretch at 1211 to 1486 (IVTFQEQGEK…YTCGSNFAIV (276 aa)) is one IV repeat. A helical membrane pass occupies residues 1265-1283 (PFEYMMFVLIMLNTLCLAM). Residues 1284–1298 (QHYEQSKMFNDAMDI) are Extracellular-facing. Residues 1299 to 1318 (LNMVFTGVFTVEMVLKVIAF) form a helical membrane-spanning segment. Residues 1319–1325 (KPKGYFS) lie on the Cytoplasmic side of the membrane. The chain crosses the membrane as a helical span at residues 1326-1347 (DAWNTFDSLIVIGSIIDVALSE). Topologically, residues 1348 to 1357 (ADNSEESNRI) are extracellular. The helical transmembrane segment at 1358–1377 (SITFFRLFRVMRLVKLLSRG) threads the bilayer. At 1378–1396 (EGIRTLLWTFIKSFQALPY) the chain is on the cytoplasmic side. Residues 1397–1416 (VALLIAMLFFIYAVIGMQMF) traverse the membrane as a helical segment. Residues 1417–1483 (GKVAMRDNNQ…GEEYTCGSNF (67 aa)) are Extracellular-facing. Residues 1464 to 1530 (LCDPDSDYNP…LGPHHLDEFK (67 aa)) are dihydropyridine binding. The segment at 1476 to 1519 (EYTCGSNFAIVYFISFYMLCAFLIINLFVAVIMDNFDYLTRDWS) is phenylalkylamine binding. The chain crosses the membrane as a helical span at residues 1484 to 1508 (AIVYFISFYMLCAFLIINLFVAVIM). The Cytoplasmic segment spans residues 1509-2203 (DNFDYLTRDW…ADEMICITTL (695 aa)). 4 disordered regions span residues 1734–1766 (NHVN…PASD), 1795–1816 (TSTN…KRPS), 1920–1963 (FERP…HRRS), and 2176–2195 (GPGY…DLAD). Residues 1795–1806 (TSTNANLNNANM) are compositionally biased toward polar residues. The span at 2180–2195 (SDEEPDPGREEEDLAD) shows a compositional bias: acidic residues.

It belongs to the calcium channel alpha-1 subunit (TC 1.A.1.11) family. CACNA1D subfamily. In terms of assembly, voltage-dependent calcium channels are multisubunit complexes, consisting of alpha-1, alpha-2, beta and delta subunits in a 1:1:1:1 ratio. The channel activity is directed by the pore-forming and voltage-sensitive alpha-1 subunit. In many cases, this subunit is sufficient to generate voltage-sensitive calcium channel activity. The auxiliary subunits beta and alpha-2/delta linked by a disulfide bridge regulate the channel activity. Interacts with CABP1 and CABP4, resulting in a near elimination of calcium-dependent inactivation of the channel. Interacts with RIMBP2. As to expression, expressed in brain, pancreatic islets and B-lymphocytes.

The protein localises to the membrane. It catalyses the reaction Ca(2+)(in) = Ca(2+)(out). Functionally, voltage-sensitive calcium channels (VSCC) mediate the entry of calcium ions into excitable cells and are also involved in a variety of calcium-dependent processes, including muscle contraction, hormone or neurotransmitter release, gene expression, cell motility, cell division and cell death. The isoform alpha-1D gives rise to L-type calcium currents. Long-lasting (L-type) calcium channels belong to the 'high-voltage activated' (HVA) group. They are blocked by dihydropyridines (DHP), phenylalkylamines, and by benzothiazepines. In terms of biological role, voltage-sensitive calcium channels (VSCC) mediate the entry of calcium ions into excitable cells and are also involved in a variety of calcium-dependent processes, including muscle contraction, hormone or neurotransmitter release, gene expression, cell motility, cell division and cell death. The isoform alpha-1D gives rise to L-type calcium currents. In Rattus norvegicus (Rat), this protein is Voltage-dependent L-type calcium channel subunit alpha-1D (Cacna1d).